The sequence spans 380 residues: Rab9 effector protein with kelch motifs (380 aa).

Kelch repeat units lie at residues 57-103 (KIFI…FLPS), 108-154 (SIWV…TSSA), 159-211 (QLYV…AAGT), 212-258 (KLFI…AAVA), 262-311 (HVYM…VIPW), and 357-380 (LCFV…TVVD).

As to quaternary structure, interacts with PIKFYVE; the interaction recruits RABEPK to the endosomal membrane. Interacts with RAB9 in its GTP-bound conformation. In terms of processing, phosphorylated on Ser residues by PIKFYVE.

The protein localises to the cytoplasm. The protein resides in the endosome membrane. In terms of biological role, rab9 effector required for endosome to trans-Golgi network (TGN) transport. The polypeptide is Rab9 effector protein with kelch motifs (Mus musculus (Mouse)).